Reading from the N-terminus, the 168-residue chain is MAVLEILSIPDPRLKVKAEKVTDVSTIQTLIDDMLETLYATGNGIGLASTQVGRKEAVVVIDISDERNDPLILVNPEVVSGENKALGQEGCLSVPEYYADVERYTSVVVSALDRDGNPITIESDEFLAIVMQHEIDHLSGNLFIDYLSPLKQKMAMKKVKKYVKAQAK.

Fe cation is bound by residues Cys-91 and His-133. Glu-134 is a catalytic residue. His-137 lines the Fe cation pocket.

Belongs to the polypeptide deformylase family. Fe(2+) serves as cofactor.

The enzyme catalyses N-terminal N-formyl-L-methionyl-[peptide] + H2O = N-terminal L-methionyl-[peptide] + formate. Functionally, removes the formyl group from the N-terminal Met of newly synthesized proteins. Requires at least a dipeptide for an efficient rate of reaction. N-terminal L-methionine is a prerequisite for activity but the enzyme has broad specificity at other positions. This Vibrio parahaemolyticus serotype O3:K6 (strain RIMD 2210633) protein is Peptide deformylase 2.